The primary structure comprises 372 residues: Probable leucine aminopeptidase MCYG_03459 (372 aa).

A signal peptide spans 1 to 18; the sequence is MKISTLAVVSAFAVTAIA. Asn95 is a glycosylation site (N-linked (GlcNAc...) asparagine). Zn(2+) is bound by residues His175 and Asp194. Asn195 and Asn219 each carry an N-linked (GlcNAc...) asparagine glycan. Residues Glu233 and Asp260 each contribute to the Zn(2+) site. Cysteines 305 and 309 form a disulfide. His338 is a Zn(2+) binding site.

It belongs to the peptidase M28 family. M28E subfamily. Monomer. It depends on Zn(2+) as a cofactor.

It localises to the secreted. Its function is as follows. Probable extracellular aminopeptidase which contributes to pathogenicity. This is Probable leucine aminopeptidase MCYG_03459 from Arthroderma otae (strain ATCC MYA-4605 / CBS 113480) (Microsporum canis).